Consider the following 483-residue polypeptide: Proline--tRNA ligase (483 aa).

The protein belongs to the class-II aminoacyl-tRNA synthetase family. ProS type 3 subfamily. Homodimer.

It is found in the cytoplasm. The enzyme catalyses tRNA(Pro) + L-proline + ATP = L-prolyl-tRNA(Pro) + AMP + diphosphate. In terms of biological role, catalyzes the attachment of proline to tRNA(Pro) in a two-step reaction: proline is first activated by ATP to form Pro-AMP and then transferred to the acceptor end of tRNA(Pro). This is Proline--tRNA ligase from Mycoplasma pneumoniae (strain ATCC 29342 / M129 / Subtype 1) (Mycoplasmoides pneumoniae).